Here is a 654-residue protein sequence, read N- to C-terminus: Acetyl-coenzyme A synthetase (654 aa).

CoA-binding positions include 191 to 194 (RRGQ) and threonine 315. ATP is bound by residues 391-393 (GEP), 415-420 (DTWWQT), aspartate 506, and arginine 521. Serine 529 provides a ligand contact to CoA. Arginine 532 is an ATP binding site. Mg(2+)-binding residues include valine 543, histidine 545, and valine 548. Lysine 615 bears the N6-acetyllysine mark.

Belongs to the ATP-dependent AMP-binding enzyme family. The cofactor is Mg(2+). Post-translationally, acetylated. Deacetylation by the SIR2-homolog deacetylase activates the enzyme.

The catalysed reaction is acetate + ATP + CoA = acetyl-CoA + AMP + diphosphate. Catalyzes the conversion of acetate into acetyl-CoA (AcCoA), an essential intermediate at the junction of anabolic and catabolic pathways. AcsA undergoes a two-step reaction. In the first half reaction, AcsA combines acetate with ATP to form acetyl-adenylate (AcAMP) intermediate. In the second half reaction, it can then transfer the acetyl group from AcAMP to the sulfhydryl group of CoA, forming the product AcCoA. The chain is Acetyl-coenzyme A synthetase from Gemmatimonas aurantiaca (strain DSM 14586 / JCM 11422 / NBRC 100505 / T-27).